The chain runs to 186 residues: MILTKLKDFVGISEHDEYEEDYDEEMEFPQSVASQPPAEEVAPPPRISREPLSLNNETSIGTGVRNNVIGMPGINNSVAEVVVVEPHSFDEMPQVIQTLRERKSVVLNLNVMDPEEAQRAVDFVAGGTFAMDGHQERIGESIFLFTPNCVKVSSLAGRSQESNETSSSVSSDNFPTWGYETSRLAQ.

Disordered stretches follow at residues 14–59 (EHDE…NETS) and 157–186 (GRSQESNETSSSVSSDNFPTWGYETSRLAQ). Residues 16-27 (DEYEEDYDEEME) show a composition bias toward acidic residues. A compositionally biased stretch (low complexity) spans 159-171 (SQESNETSSSVSS).

It belongs to the SepF family. As to quaternary structure, homodimer. Interacts with FtsZ.

The protein localises to the cytoplasm. In terms of biological role, cell division protein that is part of the divisome complex and is recruited early to the Z-ring. Probably stimulates Z-ring formation, perhaps through the cross-linking of FtsZ protofilaments. Its function overlaps with FtsA. In Synechocystis sp. (strain ATCC 27184 / PCC 6803 / Kazusa), this protein is Cell division protein SepF.